Here is a 391-residue protein sequence, read N- to C-terminus: Ectodysplasin-A (391 aa).

Positions 1–21 (MGYPEVERREPLPAAAPRERG) are enriched in basic and acidic residues. A disordered region spans residues 1 to 28 (MGYPEVERREPLPAAAPRERGSQGCGCR). Residues 1–41 (MGYPEVERREPLPAAAPRERGSQGCGCRGAPARAGEGNSCR) lie on the Cytoplasmic side of the membrane. Residues 42–62 (LFLGFFGLSLALHLLTLCCYL) form a helical; Signal-anchor for type II membrane protein membrane-spanning segment. The Extracellular segment spans residues 63–391 (ELRSELRRER…AIRLGEAPAS (329 aa)). Disordered stretches follow at residues 72 to 129 (RGTE…DSQD) and 146 to 244 (YSEE…TGTR). Residues 86–96 (TSGTLSSPGSL) show a composition bias toward low complexity. Positions 180–229 (GPPGPNGPPGPPGPPGPQGPPGIPGIPGIPGTTVMGPPGPPGPPGPQGPP) constitute a Collagen-like domain. Pro residues-rich tracts occupy residues 181-203 (PPGPNGPPGPPGPPGPQGPPGIP) and 216-228 (PPGPPGPPGPQGP). Residues 249–385 (AVVHLQGQGS…HTTFFGAIRL (137 aa)) enclose the THD domain. Asn313 is a glycosylation site (N-linked (GlcNAc...) asparagine). Cys332 and Cys346 are disulfide-bonded. N-linked (GlcNAc...) asparagine glycosylation occurs at Asn372.

The protein belongs to the tumor necrosis factor family. As to quaternary structure, homotrimer. The homotrimers may then dimerize and form higher-order oligomers. In terms of processing, N-glycosylated. Post-translationally, processing by furin produces a secreted form.

It is found in the cell membrane. The protein resides in the secreted. In terms of biological role, cytokine which is involved in epithelial-mesenchymal signaling during morphogenesis of ectodermal organs. Functions as a ligand activating the DEATH-domain containing receptors EDAR and EDA2R. Isoform TAA binds only to the receptor EDAR, while isoform TA-A2 binds exclusively to the receptor EDA2R. May also play a role in cell adhesion. Isoform TAA binds only to the receptor EDAR, while isoform TA-A2 binds exclusively to the receptor EDA2R. Functionally, isoform TA-A2 binds exclusively to the receptor EDA2R. The sequence is that of Ectodysplasin-A (Eda) from Mus musculus (Mouse).